The sequence spans 163 residues: MCVVKTTLIDSYAAQCWKCLKVRSIESQEDYEEIRSKTLEKFFECKRCEEPGDMVMNFDSLTMRWFQDEHSIPKTPQGLKRVLVVRTNCVKVDVYYESLAPRRKRFKSIKEVATFIEDKEEFKDMTLEEVSFAAPKRLKLKKKPVDSHSSSRNTEEDGVSRDA.

The CW-type zinc finger occupies 6–56 (TTLIDSYAAQCWKCLKVRSIESQEDYEEIRSKTLEKFFECKRCEEPGDMVM). Positions 65–137 (WFQDEHSIPK…EEVSFAAPKR (73 aa)) constitute an MBD domain. Residues 140-163 (LKKKPVDSHSSSRNTEEDGVSRDA) are disordered. The span at 153–163 (NTEEDGVSRDA) shows a compositional bias: basic and acidic residues.

The protein localises to the nucleus. Functionally, probable transcriptional regulator. In Arabidopsis thaliana (Mouse-ear cress), this protein is Methyl-CpG-binding domain-containing protein 3 (MBD3).